The sequence spans 25 residues: Galactose-binding lectin-2 (25 aa).

As to quaternary structure, homodimer. Post-translationally, N-glycosylated.

Its function is as follows. D-galactose specific lectin. Binds in decreasing order of affinity: melibiose, N-acetyllactosamine, D-galacturonic acid, D-galactose, methyl-alpha-D-galactoside, D-galactose, methyl-alpha-D-galactopyranoside, methyl-beta-D-galactopyranoside and lactose. Binds also the glycoproteins globotriose, asialofetuin and mucin. Possesses glycan-dependent cytotoxic activity against Burkitt's lymphoma Raji cells and erythroleukemia K562 cells. Has calcium-independent hemagglutinating activity towards human erythrocytes. The chain is Galactose-binding lectin-2 from Aplysia kurodai (Kuroda's sea hare).